The following is a 505-amino-acid chain: ATP synthase subunit alpha (505 aa).

Position 170–177 (170–177 (GDRQTGKT)) interacts with ATP.

The protein belongs to the ATPase alpha/beta chains family. In terms of assembly, F-type ATPases have 2 components, CF(1) - the catalytic core - and CF(0) - the membrane proton channel. CF(1) has five subunits: alpha(3), beta(3), gamma(1), delta(1), epsilon(1). CF(0) has four main subunits: a(1), b(1), b'(1) and c(9-12).

It localises to the cellular thylakoid membrane. The catalysed reaction is ATP + H2O + 4 H(+)(in) = ADP + phosphate + 5 H(+)(out). Functionally, produces ATP from ADP in the presence of a proton gradient across the membrane. The alpha chain is a regulatory subunit. The protein is ATP synthase subunit alpha of Synechococcus sp. (strain ATCC 27144 / PCC 6301 / SAUG 1402/1) (Anacystis nidulans).